The chain runs to 88 residues: Small ribosomal subunit protein uS17 (88 aa).

Belongs to the universal ribosomal protein uS17 family. As to quaternary structure, part of the 30S ribosomal subunit.

Functionally, one of the primary rRNA binding proteins, it binds specifically to the 5'-end of 16S ribosomal RNA. In Helicobacter hepaticus (strain ATCC 51449 / 3B1), this protein is Small ribosomal subunit protein uS17.